Consider the following 178-residue polypeptide: ATP synthase subunit delta (178 aa).

This sequence belongs to the ATPase delta chain family. In terms of assembly, F-type ATPases have 2 components, F(1) - the catalytic core - and F(0) - the membrane proton channel. F(1) has five subunits: alpha(3), beta(3), gamma(1), delta(1), epsilon(1). F(0) has three main subunits: a(1), b(2) and c(10-14). The alpha and beta chains form an alternating ring which encloses part of the gamma chain. F(1) is attached to F(0) by a central stalk formed by the gamma and epsilon chains, while a peripheral stalk is formed by the delta and b chains.

The protein resides in the cell inner membrane. Its function is as follows. F(1)F(0) ATP synthase produces ATP from ADP in the presence of a proton or sodium gradient. F-type ATPases consist of two structural domains, F(1) containing the extramembraneous catalytic core and F(0) containing the membrane proton channel, linked together by a central stalk and a peripheral stalk. During catalysis, ATP synthesis in the catalytic domain of F(1) is coupled via a rotary mechanism of the central stalk subunits to proton translocation. Functionally, this protein is part of the stalk that links CF(0) to CF(1). It either transmits conformational changes from CF(0) to CF(1) or is implicated in proton conduction. This chain is ATP synthase subunit delta, found in Laribacter hongkongensis (strain HLHK9).